The primary structure comprises 859 residues: Photoactivated adenylate cyclase subunit beta-like protein FB (859 aa).

The BLUF 1 domain maps to 56 to 149; that stretch reads LRRLMYLSKS…GRMYGDWHMK (94 aa). Positions 205–333 constitute a Guanylate cyclase 1 domain; the sequence is VVTFIYLVEF…DCINTTSRIA (129 aa). Residues 414–449 are disordered; it reads GLPNSQRPPIFDDTPKANRRPRTPGYGGRQRSDSQV. The region spanning 471–563 is the BLUF 2 domain; it reads LTTLTYISQA…RVYPSEWTLT (93 aa). Positions 619–748 constitute a Guanylate cyclase 2 domain; sequence VMLATDICSF…AVSARVMEVE (130 aa). The tract at residues 813 to 859 is disordered; it reads AARSGEKPLTEPEAAKPDFRVSPGRVRHGDSGRRSNSAQGKRSIQVR. Residues 815–831 show a composition bias toward basic and acidic residues; the sequence is RSGEKPLTEPEAAKPDF. Residues 846 to 859 are compositionally biased toward polar residues; that stretch reads RSNSAQGKRSIQVR.

It belongs to the adenylyl cyclase class-4/guanylyl cyclase family. Heterotetramer of two alpha and two beta subunits.

It localises to the cell projection. The protein resides in the cilium. It is found in the flagellum. This Euglena gracilis protein is Photoactivated adenylate cyclase subunit beta-like protein FB.